A 135-amino-acid chain; its full sequence is Endoribonuclease YbeY (135 aa).

The Zn(2+) site is built by H94, H98, and H104.

The protein belongs to the endoribonuclease YbeY family. Zn(2+) serves as cofactor.

It is found in the cytoplasm. In terms of biological role, single strand-specific metallo-endoribonuclease involved in late-stage 70S ribosome quality control and in maturation of the 3' terminus of the 16S rRNA. This chain is Endoribonuclease YbeY, found in Campylobacter jejuni subsp. jejuni serotype O:2 (strain ATCC 700819 / NCTC 11168).